The sequence spans 115 residues: Nucleoid-associated protein Ava_2322 (115 aa).

The protein belongs to the YbaB/EbfC family. As to quaternary structure, homodimer.

The protein localises to the cytoplasm. Its subcellular location is the nucleoid. In terms of biological role, binds to DNA and alters its conformation. May be involved in regulation of gene expression, nucleoid organization and DNA protection. The chain is Nucleoid-associated protein Ava_2322 from Trichormus variabilis (strain ATCC 29413 / PCC 7937) (Anabaena variabilis).